Consider the following 686-residue polypeptide: Bromodomain-containing factor 1 (686 aa).

2 disordered regions span residues 1–69 (MTDI…PAGL) and 85–150 (NGYN…NPIP). A compositionally biased stretch (low complexity) spans 9–25 (NDVDVNGNNVNDDVSSN). Basic and acidic residues predominate over residues 99–120 (QGLKKEEGGQGTKQEDLDENSK). Residues 130-139 (EPAPAPPPEP) are compositionally biased toward pro residues. Positions 145–254 (PQNPIPKHQQ…ASFEKHMLNM (110 aa)) constitute a Bromo 1 domain. S270 is modified (phosphoserine). The disordered stretch occupies residues 283–304 (QTHNGRPKRTIHPPKSKDIYPY). Residues 287–296 (GRPKRTIHPP) are compositionally biased toward basic residues. Residues 312–421 (KRLQQAMKFC…EVFNSKWADR (110 aa)) enclose the Bromo 2 domain. Disordered regions lie at residues 424-447 (LDDYDSDEDSRTQGDYDDYESEYS), 486-523 (IRKERRLARGSKKRGKRSKGRSGSKNASSKGRRDKKNK), 594-636 (SSGA…EQSR), and 649-686 (DSASPLSQNGSPGQIQSAAHNGFSSSSDDDVSSESEEE). S429 is modified (phosphoserine). Acidic residues predominate over residues 438 to 447 (DYDDYESEYS). Positions 460–499 (AIQYLEEQLARMKVELQQLKKQELEKIRKERRLARGSKKR) form a coiled coil. Residues 488-507 (KERRLARGSKKRGKRSKGRS) are compositionally biased toward basic residues. An NET domain is found at 518–598 (RDKKNKLKTV…RQYESSSGAS (81 aa)). Composition is skewed to polar residues over residues 594–620 (SSGASNGLDGTSGVTRDASSLSPTSAG) and 652–671 (SPLSQNGSPGQIQSAAHNGF). A phosphoserine mark is found at S615 and S659. The segment covering 675-686 (SDDDVSSESEEE) has biased composition (acidic residues).

This sequence belongs to the BET family. Interacts with the TFIID subunit TAF7 and with acetylated histones H3 and H4. In terms of processing, phosphorylated by the casein kinase CK2 complex.

The protein resides in the nucleus. In terms of biological role, transcription factor involved in the expression of a broad class of genes including snRNAs. Required for sporulation and DNA-damage repair. Prevents the spreading of SIR silencing at telomeres and protects histone H4, but not H3, from deacetylation. This chain is Bromodomain-containing factor 1 (BDF1), found in Saccharomyces cerevisiae (strain ATCC 204508 / S288c) (Baker's yeast).